The chain runs to 968 residues: Alanine--tRNA ligase, cytoplasmic (968 aa).

ATP-binding positions include Arg77, His95, Trp176, and 214 to 216 (IWN). L-alanine contacts are provided by Asn216 and Asp239. Gly243 serves as a coordination point for ATP. Zn(2+)-binding residues include His606, His610, Cys724, and His728.

This sequence belongs to the class-II aminoacyl-tRNA synthetase family. Monomer. Zn(2+) is required as a cofactor.

The protein localises to the cytoplasm. It carries out the reaction tRNA(Ala) + L-alanine + ATP = L-alanyl-tRNA(Ala) + AMP + diphosphate. Its function is as follows. Catalyzes the attachment of alanine to tRNA(Ala) in a two-step reaction: alanine is first activated by ATP to form Ala-AMP and then transferred to the acceptor end of tRNA(Ala). Also edits incorrectly charged tRNA(Ala) via its editing domain. This chain is Alanine--tRNA ligase, cytoplasmic, found in Caenorhabditis elegans.